A 257-amino-acid chain; its full sequence is Large ribosomal subunit protein uL3 (257 aa).

Q151 is subject to N5-methylglutamine. Positions Y218–S257 are disordered. Positions A225–P236 are enriched in low complexity.

Belongs to the universal ribosomal protein uL3 family. As to quaternary structure, part of the 50S ribosomal subunit. Forms a cluster with proteins L14 and L19. Post-translationally, methylated by PrmB.

Its function is as follows. One of the primary rRNA binding proteins, it binds directly near the 3'-end of the 23S rRNA, where it nucleates assembly of the 50S subunit. The polypeptide is Large ribosomal subunit protein uL3 (Sphingopyxis alaskensis (strain DSM 13593 / LMG 18877 / RB2256) (Sphingomonas alaskensis)).